Consider the following 225-residue polypeptide: Probable manganese catalase (225 aa).

Glutamate 37 is a binding site for Mn(2+). 2 residues coordinate Ca(2+): aspartate 58 and aspartate 62. The Mn(2+) site is built by glutamate 67, histidine 70, glutamate 138, and histidine 171. Serine 204 provides a ligand contact to Ca(2+). Positions 204–225 (STPGRYVQDPNPTEPSFSNPRR) are disordered. The segment covering 213–225 (PNPTEPSFSNPRR) has biased composition (polar residues).

It belongs to the manganese catalase family. The cofactor is Ca(2+). Requires Mn(2+) as cofactor.

The catalysed reaction is 2 H2O2 = O2 + 2 H2O. Its function is as follows. Catalyzes the decomposition of hydrogen peroxide into water and oxygen. This Clostridium acetobutylicum (strain ATCC 824 / DSM 792 / JCM 1419 / IAM 19013 / LMG 5710 / NBRC 13948 / NRRL B-527 / VKM B-1787 / 2291 / W) protein is Probable manganese catalase.